Here is a 416-residue protein sequence, read N- to C-terminus: Dihydrolipoyllysine-residue succinyltransferase component of 2-oxoglutarate dehydrogenase complex (416 aa).

The Lipoyl-binding domain maps to 3–78; sequence IVDVKVPQLS…VADEIIAKID (76 aa). Lysine 44 carries the N6-lipoyllysine modification. Positions 115-152 constitute a Peripheral subunit-binding (PSBD) domain; sequence VAMPSAAKLMAEAGLSAGQVAGTGKDGRITKGDALAAA. Active-site residues include histidine 387 and aspartate 391.

This sequence belongs to the 2-oxoacid dehydrogenase family. In terms of assembly, forms a 24-polypeptide structural core with octahedral symmetry. Part of the 2-oxoglutarate dehydrogenase (OGDH) complex composed of E1 (2-oxoglutarate dehydrogenase), E2 (dihydrolipoamide succinyltransferase) and E3 (dihydrolipoamide dehydrogenase); the complex contains multiple copies of the three enzymatic components (E1, E2 and E3). Requires (R)-lipoate as cofactor.

It carries out the reaction N(6)-[(R)-dihydrolipoyl]-L-lysyl-[protein] + succinyl-CoA = N(6)-[(R)-S(8)-succinyldihydrolipoyl]-L-lysyl-[protein] + CoA. The protein operates within amino-acid degradation; L-lysine degradation via saccharopine pathway; glutaryl-CoA from L-lysine: step 6/6. Functionally, E2 component of the 2-oxoglutarate dehydrogenase (OGDH) complex which catalyzes the second step in the conversion of 2-oxoglutarate to succinyl-CoA and CO(2). The sequence is that of Dihydrolipoyllysine-residue succinyltransferase component of 2-oxoglutarate dehydrogenase complex (sucB) from Cupriavidus necator (strain ATCC 17699 / DSM 428 / KCTC 22496 / NCIMB 10442 / H16 / Stanier 337) (Ralstonia eutropha).